The primary structure comprises 297 residues: Transmembrane protein 178A (297 aa).

Positions 1 to 25 are cleaved as a signal peptide; that stretch reads MEPRALVTALSLGLSLCSLGLLVTA. The Extracellular portion of the chain corresponds to 26–179; the sequence is IFTDHWYETD…LLHLRRITAG (154 aa). Over residues 41–57 the composition is skewed to basic and acidic residues; that stretch reads ESCERSRAGADPPDQKN. Positions 41 to 84 are disordered; the sequence is ESCERSRAGADPPDQKNRLMPLSHLPLRDSPPLGRRLLPGGPGR. Residues 68-79 are compositionally biased toward low complexity; sequence RDSPPLGRRLLP. N-linked (GlcNAc...) asparagine glycosylation occurs at asparagine 158. The helical transmembrane segment at 180–200 threads the bilayer; the sequence is FLGMAVAVLLCGCIVATVSFF. Residues 201 to 208 lie on the Cytoplasmic side of the membrane; the sequence is WEESLTQH. A helical transmembrane segment spans residues 209-229; it reads VAGLLFLMTGIFCTISLCTYA. Topologically, residues 230 to 257 are extracellular; that stretch reads ASISYDLNRLPKLIYSLPADVEHGYSWS. Residues 258-278 form a helical membrane-spanning segment; it reads IFCAWCSLGFIVAAGGLCIAY. The Cytoplasmic portion of the chain corresponds to 279 to 297; it reads PFISRTKIAQLKSGRDSTV.

The protein belongs to the TMEM178 family. As to quaternary structure, interacts with STIM1.

It localises to the endoplasmic reticulum membrane. Its function is as follows. Acts as a negative regulator of osteoclast differentiation in basal and inflammatory conditions by regulating TNFSF11-induced Ca (2+) fluxes, thereby controlling the induction of NFATC1. The protein is Transmembrane protein 178A (TMEM178A) of Homo sapiens (Human).